Here is a 268-residue protein sequence, read N- to C-terminus: Tetraspanin-5 (268 aa).

Topologically, residues 1–17 are cytoplasmic; that stretch reads MSGKHYKGPEVSCCIKY. Residues 18-38 traverse the membrane as a helical segment; the sequence is FIFGFNVIFWFLGITFLGIGL. Topologically, residues 39–61 are extracellular; sequence WAWNEKGVLSNISSITDLGGFDP. The N-linked (GlcNAc...) asparagine glycan is linked to N49. A helical membrane pass occupies residues 62 to 82; that stretch reads VWLFLVVGGVMFILGFAGCIG. Over 83 to 92 the chain is Cytoplasmic; that stretch reads ALRENTFLLK. The chain crosses the membrane as a helical span at residues 93 to 113; it reads FFSVFLGIIFFLELTAGVLAF. At 114 to 232 the chain is on the extracellular side; that stretch reads VFKDWIKDQL…PQFEKWLQDN (119 aa). Disulfide bonds link C153/C221, C154/C186, C170/C180, and C187/C200. N-linked (GlcNAc...) asparagine glycans are attached at residues N169 and N174. N232 carries N-linked (GlcNAc...) asparagine glycosylation. The helical transmembrane segment at 233 to 253 threads the bilayer; it reads LTIVAGIFIGIALLQIFGICL. The Cytoplasmic portion of the chain corresponds to 254 to 268; the sequence is AQNLVSDIEAVRASW.

It belongs to the tetraspanin (TM4SF) family. Interacts with ADAM10; the interaction influences ADAM10 substrate specificity, endocytosis and turnover. Post-translationally, palmitoylated.

It localises to the cell membrane. Its function is as follows. Part of TspanC8 subgroup, composed of 6 members that interact with the transmembrane metalloprotease ADAM10. This interaction is required for ADAM10 exit from the endoplasmic reticulum and for enzymatic maturation and trafficking to the cell surface as well as substrate specificity. Different TspanC8/ADAM10 complexes have distinct substrates. Promotes ADAM10-mediated cleavage of CD44. Seems to regulate VE-cadherin expression in endothelial cells probably through interaction with ADAM10, promoting leukocyte transmigration. This Homo sapiens (Human) protein is Tetraspanin-5.